We begin with the raw amino-acid sequence, 843 residues long: Complement component C7 (843 aa).

The N-terminal stretch at 1–22 is a signal peptide; sequence MKVISLFILVGFIGEFQSFSSA. Positions 27–80 constitute a TSP type-1 1 domain; that stretch reads NCQWDFYAPWSECNGCTKTQTRRRSVAVYGQYGGQPCVGNAFETQSCEPTRGCP. Disulfide bonds link Cys-28–Cys-63, Cys-39–Cys-73, Cys-42–Cys-79, Cys-85–Cys-96, Cys-91–Cys-109, Cys-103–Cys-119, and Cys-128–Cys-165. Trp-36 carries C-linked (Man) tryptophan glycosylation. The 39-residue stretch at 83-121 folds into the LDL-receptor class A domain; sequence EGCGERFRCFSGQCISKSLVCNGDSDCDEDSADEDRCED. The span at 108 to 120 shows a compositional bias: acidic residues; sequence DCDEDSADEDRCE. A disordered region spans residues 108–143; sequence DCDEDSADEDRCEDSERRPSCDIDKPPPNIELTGNG. Residues 121-132 show a composition bias toward basic and acidic residues; it reads DSERRPSCDIDK. The 333-residue stretch at 124 to 456 folds into the MACPF domain; it reads RRPSCDIDKP…EYLDEFDPCH (333 aa). Asn-202 is a glycosylation site (N-linked (GlcNAc...) asparagine). The tract at residues 219-240 is disordered; it reads SRKRSFFRSSSSSSRSYTSHTN. Residues 225 to 234 show a composition bias toward low complexity; the sequence is FRSSSSSSRS. 12 disulfides stabilise this stretch: Cys-337/Cys-353, Cys-433/Cys-560, Cys-455/Cys-505, Cys-457/Cys-473, Cys-460/Cys-475, Cys-477/Cys-486, Cys-512/Cys-545, Cys-523/Cys-535, Cys-571/Cys-613, Cys-599/Cys-626, Cys-631/Cys-673, and Cys-659/Cys-688. The 31-residue stretch at 457–487 folds into the EGF-like domain; that stretch reads CRPCQNGGLATVEGTHCLCHCKPYTFGAACE. The TSP type-1 2 domain occupies 500–549; the sequence is DGGWSCWSSWSPCVQGKKTRSRECNNPPPSGGGRSCVGETTESTQCEDEE. C-linked (Man) tryptophan; partial glycosylation is found at Trp-503, Trp-506, and Trp-509. The disordered stretch occupies residues 516–538; it reads KKTRSRECNNPPPSGGGRSCVGE. 2 CCP regions span residues 545–615 and 616–693; these read CEDE…RCGE and DLRW…QKEN. Sushi domains follow at residues 569–628 and 629–690; these read EFCP…HCQK and IACV…RCVQ. 2 factor I module (FIM) regions span residues 695-770 and 771-843; these read LTQA…ASAE and KACG…AETQ. Thr-696 carries an O-linked (GalNAc...) threonine glycan. 9 disulfide bridges follow: Cys-702/Cys-713, Cys-715/Cys-750, Cys-721/Cys-743, Cys-728/Cys-763, Cys-773/Cys-782, Cys-776/Cys-789, Cys-791/Cys-825, Cys-797/Cys-818, and Cys-805/Cys-838. Asn-754 carries an N-linked (GlcNAc...) (complex) asparagine glycan.

This sequence belongs to the complement C6/C7/C8/C9 family. In terms of assembly, monomer or dimer; as a C5b-7 complex it can also form multimeric rosettes. Component of the membrane attack complex (MAC), composed of complement C5b, C6, C7, C8A, C8B, C8G and multiple copies of the pore-forming subunit C9. In terms of processing, C-, N- and O-glycosylated. O-glycosylated with core 1 or possibly core 8 glycans.

It localises to the secreted. Its subcellular location is the target cell membrane. With respect to regulation, membrane attack complex (MAC) assembly is inhibited by CD59, thereby protecting self-cells from damage during complement activation. MAC assembly is also inhibited by clusterin (CLU) chaperones that inhibit polymerization of C9. Its function is as follows. Component of the membrane attack complex (MAC), a multiprotein complex activated by the complement cascade, which inserts into a target cell membrane and forms a pore, leading to target cell membrane rupture and cell lysis. The MAC is initiated by proteolytic cleavage of C5 into complement C5b in response to the classical, alternative, lectin and GZMK complement pathways. The complement pathways consist in a cascade of proteins that leads to phagocytosis and breakdown of pathogens and signaling that strengthens the adaptive immune system. C7 serves as a membrane anchor. During MAC assembly, associates with C5b and C6 to form the C5b-7 complex, a key lipophilic precursor of the MAC complex, which associates with the outer leaflet and reduces the energy for membrane bending. The sequence is that of Complement component C7 from Homo sapiens (Human).